A 455-amino-acid polypeptide reads, in one-letter code: DENN domain-containing protein 11 (455 aa).

The segment at 1–59 is disordered; that stretch reads MVEQGDAAPLLRWAEGPAVSVPQDPALQAGGWVRGGSGEGRVAAEAPRRREPDEPAPPE. Valine 2 carries the N-acetylvaline modification. The uDENN domain occupies 15–187; that stretch reads EGPAVSVPQD…QLEMPGHYSH (173 aa). An Omega-N-methylarginine modification is found at arginine 41. Residues 214–362 enclose the cDENN domain; that stretch reads WLPSIHRYMY…INSADREKYR (149 aa). In terms of domain architecture, dDENN spans 364 to 455; that stretch reads LNEQRQMLLY…MLVIDNPCCP (92 aa).

This sequence belongs to the DENND11 family.

Functionally, probable guanine nucleotide exchange factor (GEF). May promote the exchange of GDP to GTP, converting inactive GDP-bound small GTPases into their active GTP-bound form. May play a role in neuritogenesis, as well as in neuronal recovery and/or restructuring in the hippocampus following transient cerebral ischemia. In Mus musculus (Mouse), this protein is DENN domain-containing protein 11 (Dennd11).